We begin with the raw amino-acid sequence, 186 residues long: dCTP deaminase (186 aa).

107 to 112 provides a ligand contact to dCTP; that stretch reads KSTYAR. Residue E133 is the Proton donor/acceptor of the active site. DCTP is bound by residues Q152, Y166, and Q176.

This sequence belongs to the dCTP deaminase family. In terms of assembly, homotrimer.

The catalysed reaction is dCTP + H2O + H(+) = dUTP + NH4(+). Its pathway is pyrimidine metabolism; dUMP biosynthesis; dUMP from dCTP (dUTP route): step 1/2. Catalyzes the deamination of dCTP to dUTP. The chain is dCTP deaminase from Campylobacter jejuni (strain RM1221).